An 86-amino-acid polypeptide reads, in one-letter code: uncharacterized protein (86 aa).

This is an uncharacterized protein from Psittacid herpesvirus 1 (isolate Amazon parrot/-/97-0001/1997) (PsHV-1).